Consider the following 312-residue polypeptide: Glyoxylate/hydroxypyruvate reductase A (312 aa).

Residue R227 is part of the active site. Residue H275 is the Proton donor of the active site.

It belongs to the D-isomer specific 2-hydroxyacid dehydrogenase family. GhrA subfamily.

Its subcellular location is the cytoplasm. It catalyses the reaction glycolate + NADP(+) = glyoxylate + NADPH + H(+). The enzyme catalyses (R)-glycerate + NAD(+) = 3-hydroxypyruvate + NADH + H(+). The catalysed reaction is (R)-glycerate + NADP(+) = 3-hydroxypyruvate + NADPH + H(+). Catalyzes the NADPH-dependent reduction of glyoxylate and hydroxypyruvate into glycolate and glycerate, respectively. The chain is Glyoxylate/hydroxypyruvate reductase A from Escherichia coli (strain UTI89 / UPEC).